Consider the following 148-residue polypeptide: Ribonuclease H (148 aa).

The 142-residue stretch at 2-143 (TADIIYIYSD…ADVLANQGVL (142 aa)) folds into the RNase H type-1 domain. 4 residues coordinate Mg(2+): Asp11, Glu49, Asp71, and Asp135.

The protein belongs to the RNase H family. Monomer. The cofactor is Mg(2+).

The protein localises to the cytoplasm. It catalyses the reaction Endonucleolytic cleavage to 5'-phosphomonoester.. Endonuclease that specifically degrades the RNA of RNA-DNA hybrids. This is Ribonuclease H from Thiobacillus denitrificans (strain ATCC 25259 / T1).